The sequence spans 110 residues: UPF0060 membrane protein Mfla_2554 (110 aa).

4 helical membrane passes run Val-7–Trp-27, Ser-33–Leu-53, Val-61–Asp-81, and Ile-83–Ile-103.

It belongs to the UPF0060 family.

The protein resides in the cell inner membrane. This Methylobacillus flagellatus (strain ATCC 51484 / DSM 6875 / VKM B-1610 / KT) protein is UPF0060 membrane protein Mfla_2554.